The chain runs to 92 residues: Ig kappa chain V region 3381 (92 aa).

Residues 1 to 23 are framework-1; sequence AFELTQTPASVEAAVGGTVTINC. Residues 24–34 are complementarity-determining-1; sequence QASESISNWLA. The framework-2 stretch occupies residues 35–49; the sequence is WYQQKPGQPXKLLIY. The complementarity-determining-2 stretch occupies residues 50–56; that stretch reads KASTLAS. The interval 57–88 is framework-3; the sequence is GVSSRFKGSGSGTQFTLTISDLECADAATYYC. Positions 89–92 are complementarity-determining-3; the sequence is QSTD.

In Oryctolagus cuniculus (Rabbit), this protein is Ig kappa chain V region 3381.